The following is a 695-amino-acid chain: Follicle-stimulating hormone receptor (695 aa).

An N-terminal signal peptide occupies residues methionine 1 to glycine 17. Intrachain disulfides connect cysteine 18–cysteine 25 and cysteine 23–cysteine 32. The LRRNT domain occupies cysteine 18–arginine 46. The Extracellular portion of the chain corresponds to cysteine 18–arginine 366. LRR repeat units lie at residues valine 49–leucine 72, glutamate 73–leucine 97, histidine 98–asparagine 118, leucine 119–serine 143, leucine 144–serine 169, phenylalanine 170–glycine 192, threonine 193–glycine 216, alanine 217–asparagine 240, and leucine 241–glutamate 259. 2 N-linked (GlcNAc...) asparagine glycosylation sites follow: asparagine 191 and asparagine 199. Disulfide bonds link cysteine 275-cysteine 346, cysteine 276-cysteine 292, cysteine 276-cysteine 356, and cysteine 292-cysteine 338. Asparagine 293 carries N-linked (GlcNAc...) asparagine glycosylation. Tyrosine 335 bears the Sulfotyrosine mark. Residues valine 367–leucine 387 traverse the membrane as a helical segment. Topologically, residues isoleucine 388–arginine 398 are cytoplasmic. Residues phenylalanine 399 to valine 421 form a helical membrane-spanning segment. Residues aspartate 422–aspartate 443 are Extracellular-facing. A disulfide bond links cysteine 442 and cysteine 517. Residues alanine 444 to leucine 465 traverse the membrane as a helical segment. Topologically, residues glutamate 466–histidine 485 are cytoplasmic. Residues alanine 486–isoleucine 508 traverse the membrane as a helical segment. Residues serine 509 to glutamine 528 lie on the Extracellular side of the membrane. The chain crosses the membrane as a helical span at residues leucine 529–threonine 550. Over histidine 551–arginine 573 the chain is Cytoplasmic. The helical transmembrane segment at methionine 574 to leucine 597 threads the bilayer. Residues lysine 598–lysine 608 lie on the Extracellular side of the membrane. The helical transmembrane segment at isoleucine 609–threonine 630 threads the bilayer. Residues lysine 631 to asparagine 695 are Cytoplasmic-facing.

It belongs to the G-protein coupled receptor 1 family. FSH/LSH/TSH subfamily. As to quaternary structure, homotrimer. Functions as a homotrimer binding the FSH hormone heterodimer composed of CGA and FSHB. Interacts with ARRB2. Interacts with APPL2; interaction is independent of follicle stimulating hormone stimulation. In terms of processing, N-glycosylated; indirectly required for FSH-binding, possibly via a conformational change that allows high affinity binding of hormone. Sulfated.

It localises to the cell membrane. Functionally, g protein-coupled receptor for follitropin, the follicle-stimulating hormone. Through cAMP production activates the downstream PI3K-AKT and ERK1/ERK2 signaling pathways. The sequence is that of Follicle-stimulating hormone receptor (FSHR) from Sus scrofa (Pig).